The primary structure comprises 232 residues: Modulator of macroautophagy TMEM150B (232 aa).

The Cytoplasmic portion of the chain corresponds to 1 to 6 (MWAWAL). A helical transmembrane segment spans residues 7 to 27 (LPVFLAVFGTVGLWAVYAIAV). At 28–50 (SNNSVNITIEFPYISTCGAYTPQ) the chain is on the extracellular side. N-linked (GlcNAc...) asparagine glycosylation is found at Asn29 and Asn33. Residues 51 to 71 (SCLFAQICNICCVLALWIVVI) traverse the membrane as a helical segment. Residues 72–83 (RFQQIRDLGRSS) lie on the Cytoplasmic side of the membrane. Residues 84-104 (HLNTAGLVLGFISSIGISILG) traverse the membrane as a helical segment. Residues 105–115 (NFQQTIIQEVH) lie on the Extracellular side of the membrane. A helical membrane pass occupies residues 116-136 (LLGALMAFFLGLAYFWIQAFI). Residues 137 to 153 (TYFSPPSRDNKWLVPVR) lie on the Cytoplasmic side of the membrane. Residues 154–174 (FVLCSQCTCMVICMFVLHSTG) traverse the membrane as a helical segment. Topologically, residues 175–177 (FRS) are extracellular. A helical transmembrane segment spans residues 178 to 198 (AAAICEWILVMCFFALFGVFA). Over 199–232 (AEFRHIDFHKLTVQKEGLKVANNDNVVWTVQDVQ) the chain is Cytoplasmic.

This sequence belongs to the DRAM/TMEM150 family.

The protein resides in the cell membrane. It is found in the endosome membrane. It localises to the cytoplasmic vesicle. The protein localises to the autophagosome membrane. Functionally, modulator of macroautophagy that causes accumulation of autophagosomes under basal conditions and enhances autophagic flux. Represses cell death and promotes long-term clonogenic survival of cells grown in the absence of glucose in a macroautophagy-independent manner. May have some role in extracellular matrix engulfment or growth factor receptor recycling, both of which can modulate cell survival. The protein is Modulator of macroautophagy TMEM150B of Danio rerio (Zebrafish).